A 98-amino-acid polypeptide reads, in one-letter code: MSLINMNLMLAFTMSLTGLLMYRHHLMSALLCLEGMMLSLFTLTTLTILNTHFTLTNMIPIILLVFAACEAAIGLALLVMISSTYGTDYVQSLNLLQC.

A run of 3 helical transmembrane segments spans residues Met-1–Met-21, Ala-29–Leu-49, and Ile-61–Ile-81.

Belongs to the complex I subunit 4L family. Core subunit of respiratory chain NADH dehydrogenase (Complex I) which is composed of 45 different subunits.

The protein resides in the mitochondrion inner membrane. It carries out the reaction a ubiquinone + NADH + 5 H(+)(in) = a ubiquinol + NAD(+) + 4 H(+)(out). In terms of biological role, core subunit of the mitochondrial membrane respiratory chain NADH dehydrogenase (Complex I) which catalyzes electron transfer from NADH through the respiratory chain, using ubiquinone as an electron acceptor. Part of the enzyme membrane arm which is embedded in the lipid bilayer and involved in proton translocation. The protein is NADH-ubiquinone oxidoreductase chain 4L (MT-ND4L) of Platanista minor (Indus river dolphin).